The chain runs to 412 residues: Argininosuccinate synthase (412 aa).

10–18 (AYSGGLDTS) provides a ligand contact to ATP. Position 89 (Tyr89) interacts with L-citrulline. An ATP-binding site is contributed by Gly119. L-aspartate contacts are provided by Thr121, Asn125, and Asp126. Asn125 contacts L-citrulline. The L-citrulline site is built by Arg129, Ser177, Glu261, and Tyr273.

This sequence belongs to the argininosuccinate synthase family. Type 1 subfamily. In terms of assembly, homotetramer.

The protein localises to the cytoplasm. It carries out the reaction L-citrulline + L-aspartate + ATP = 2-(N(omega)-L-arginino)succinate + AMP + diphosphate + H(+). Its pathway is amino-acid biosynthesis; L-arginine biosynthesis; L-arginine from L-ornithine and carbamoyl phosphate: step 2/3. The protein is Argininosuccinate synthase of Bifidobacterium longum (strain DJO10A).